Consider the following 194-residue polypeptide: Small ribosomal subunit protein uS4c (194 aa).

The region spanning 82 to 143 is the S4 RNA-binding domain; it reads MRLDNILFRL…KERSKVLIQN (62 aa).

This sequence belongs to the universal ribosomal protein uS4 family. Part of the 30S ribosomal subunit. Contacts protein S5. The interaction surface between S4 and S5 is involved in control of translational fidelity.

It localises to the plastid. Its subcellular location is the chloroplast. In terms of biological role, one of the primary rRNA binding proteins, it binds directly to 16S rRNA where it nucleates assembly of the body of the 30S subunit. With S5 and S12 plays an important role in translational accuracy. This is Small ribosomal subunit protein uS4c (rps4) from Cypella sp. (strain Porto Alegre 027).